Here is a 105-residue protein sequence, read N- to C-terminus: Guanyl-specific ribonuclease U1 (105 aa).

Pyrrolidone carboxylic acid is present on Gln-1. 2 disulfide bridges follow: Cys-8-Cys-103 and Cys-51-Cys-87. His-37 is an active-site residue. The active-site Proton acceptor is Glu-57. His-92 functions as the Proton donor in the catalytic mechanism.

Belongs to the ribonuclease N1/T1 family.

The catalysed reaction is [RNA] containing guanosine + H2O = an [RNA fragment]-3'-guanosine-3'-phosphate + a 5'-hydroxy-ribonucleotide-3'-[RNA fragment].. The polypeptide is Guanyl-specific ribonuclease U1 (Ustilago sphaerogena (Smut fungus)).